We begin with the raw amino-acid sequence, 302 residues long: Zinc transporter ZIP1 (302 aa).

The Extracellular segment spans residues 1 to 6 (MDYLLQ). A helical transmembrane segment spans residues 7–27 (VKVGALVGLLLLTLFFGFIPA). The Cytoplasmic segment spans residues 28–44 (RMKWFHVTGGTELHKAV). The helical transmembrane segment at 45–65 (LSFVSCFAGGVFLSACLLDII) threads the bilayer. Residues 66-86 (PDYLSDIHGELQKRDLDDGFP) lie on the Extracellular side of the membrane. A helical transmembrane segment spans residues 87–107 (LPEFIMACGFFTVLILEKMVL). The Cytoplasmic portion of the chain corresponds to 108 to 158 (SCTEGHRNEETAPLLAPAAPNGHAHGHPSVNDLEGSGHHVHVDFHAHSSFR). A helical membrane pass occupies residues 159-179 (SFMLFLSLSLHSVFEGLAIGL). Over 180–185 (QTTNAK) the chain is Extracellular. Residues 186–206 (VLEICIAILVHKSIIVFSLSV) form a helical membrane-spanning segment. At 207–219 (KLVQSAVKPLWVV) the chain is on the cytoplasmic side. Residues 220–240 (LYVTVFAIMSPLGIGIGIVVI) traverse the membrane as a helical segment. The Extracellular segment spans residues 241 to 247 (ETERQAG). A helical transmembrane segment spans residues 248 to 268 (GLIQAVLEGLAAGTFIYITFL). At 269–281 (EILPHELNSSERP) the chain is on the cytoplasmic side. A helical membrane pass occupies residues 282–302 (LLKVLFLLCGFSIMAALCFLG).

This sequence belongs to the ZIP transporter (TC 2.A.5) family. In terms of tissue distribution, ubiquitous. Highest levels in ovary, high levels in heart, eye, kidney and brain, moderate levels in intestine and low levels in gill and skin.

It is found in the cell membrane. It localises to the endoplasmic reticulum membrane. It carries out the reaction Zn(2+)(in) = Zn(2+)(out). Its function is as follows. Transporter for the divalent cation Zn(2+). Mediates the influx of Zn(2+) into cells from extracellular space. This is Zinc transporter ZIP1 (slc39a1) from Danio rerio (Zebrafish).